The chain runs to 196 residues: MNVVILDTGCANLNSVKSAIARHGYEPKVSRDPDVVLLADKLFLPGVGTAQAAMDQVRERELFDLIKACTQPVLGICLGMQLLGRRSEESNGVDLLGIIDEDVPKMTDFGLPLPHMGWNRVYPQAGNRLFQGIEDGAYFYFVHSYAMPVNPWTIAQCNYGEPFTAAVQKDNFYGVQFHPERSGAAGAKLLKNFLEM.

The region spanning 2–196 is the Glutamine amidotransferase type-1 domain; that stretch reads NVVILDTGCA…AKLLKNFLEM (195 aa). Catalysis depends on C77, which acts as the Nucleophile. Catalysis depends on residues H178 and E180.

Heterodimer of HisH and HisF.

Its subcellular location is the cytoplasm. It catalyses the reaction 5-[(5-phospho-1-deoxy-D-ribulos-1-ylimino)methylamino]-1-(5-phospho-beta-D-ribosyl)imidazole-4-carboxamide + L-glutamine = D-erythro-1-(imidazol-4-yl)glycerol 3-phosphate + 5-amino-1-(5-phospho-beta-D-ribosyl)imidazole-4-carboxamide + L-glutamate + H(+). The enzyme catalyses L-glutamine + H2O = L-glutamate + NH4(+). The protein operates within amino-acid biosynthesis; L-histidine biosynthesis; L-histidine from 5-phospho-alpha-D-ribose 1-diphosphate: step 5/9. Functionally, IGPS catalyzes the conversion of PRFAR and glutamine to IGP, AICAR and glutamate. The HisH subunit catalyzes the hydrolysis of glutamine to glutamate and ammonia as part of the synthesis of IGP and AICAR. The resulting ammonia molecule is channeled to the active site of HisF. The sequence is that of Imidazole glycerol phosphate synthase subunit HisH from Shigella dysenteriae serotype 1 (strain Sd197).